Here is a 298-residue protein sequence, read N- to C-terminus: ATP synthase gamma chain (298 aa).

The protein belongs to the ATPase gamma chain family. In terms of assembly, F-type ATPases have 2 components, CF(1) - the catalytic core - and CF(0) - the membrane proton channel. CF(1) has five subunits: alpha(3), beta(3), gamma(1), delta(1), epsilon(1). CF(0) has three main subunits: a, b and c.

It localises to the cell inner membrane. In terms of biological role, produces ATP from ADP in the presence of a proton gradient across the membrane. The gamma chain is believed to be important in regulating ATPase activity and the flow of protons through the CF(0) complex. The polypeptide is ATP synthase gamma chain (Francisella tularensis subsp. holarctica (strain FTNF002-00 / FTA)).